The chain runs to 166 residues: Ribonuclease P protein component (166 aa).

It belongs to the RnpA family. As to quaternary structure, consists of a catalytic RNA component (M1 or rnpB) and a protein subunit.

The catalysed reaction is Endonucleolytic cleavage of RNA, removing 5'-extranucleotides from tRNA precursor.. In terms of biological role, RNaseP catalyzes the removal of the 5'-leader sequence from pre-tRNA to produce the mature 5'-terminus. It can also cleave other RNA substrates such as 4.5S RNA. The protein component plays an auxiliary but essential role in vivo by binding to the 5'-leader sequence and broadening the substrate specificity of the ribozyme. The chain is Ribonuclease P protein component from Helicobacter pylori (strain HPAG1).